A 522-amino-acid polypeptide reads, in one-letter code: Gypsy retrotransposon integrase-like protein 1 (522 aa).

The region spanning 135-292 is the Integrase catalytic domain; the sequence is KVENPWSLVT…TPYFQMFSRN (158 aa). At S502 the chain carries Phosphoserine.

The polypeptide is Gypsy retrotransposon integrase-like protein 1 (GIN1) (Pongo abelii (Sumatran orangutan)).